The chain runs to 365 residues: Magnesium-chelatase subunit ChlI homolog (365 aa).

40–47 (EKGTAKST) is a binding site for ATP. The segment at 340–365 (FKQQNNKDNEEKEEHKDDDVKKNMMK) is disordered. Basic and acidic residues predominate over residues 344–365 (NNKDNEEKEEHKDDDVKKNMMK).

This sequence belongs to the Mg-chelatase subunits D/I family.

The polypeptide is Magnesium-chelatase subunit ChlI homolog (Methanocaldococcus jannaschii (strain ATCC 43067 / DSM 2661 / JAL-1 / JCM 10045 / NBRC 100440) (Methanococcus jannaschii)).